The following is a 244-amino-acid chain: Mitochondrial import inner membrane translocase subunit Tim21 (244 aa).

A mitochondrion-targeting transit peptide spans 1–18; sequence MICAFLRVVQHAEKLHGS. Residues 65-96 form a disordered region; that stretch reads TQGPDPRKAKEDSTKQVSIRRNQREETGVSMS. A compositionally biased stretch (basic and acidic residues) spans 69-78; sequence DPRKAKEDST. The chain crosses the membrane as a helical span at residues 107 to 127; that stretch reads SYLIVVLFGVGLTGGLLYAIF.

The protein belongs to the TIM21 family. In terms of assembly, component of the TIM23 complex. Component of the MITRAC (mitochondrial translation regulation assembly intermediate of cytochrome c oxidase complex) complex, the core components of this complex being COA3/MITRAC12 and COX14. Interacts with COA3 and MT-CO1/COX1.

The protein resides in the mitochondrion membrane. Participates in the translocation of transit peptide-containing proteins across the mitochondrial inner membrane. Also required for assembly of mitochondrial respiratory chain complex I and complex IV as component of the MITRAC (mitochondrial translation regulation assembly intermediate of cytochrome c oxidase complex) complex. Probably shuttles between the presequence translocase and respiratory-chain assembly intermediates in a process that promotes incorporation of early nuclear-encoded subunits into these complexes. The protein is Mitochondrial import inner membrane translocase subunit Tim21 (Timm21) of Mus musculus (Mouse).